A 426-amino-acid chain; its full sequence is MAGLGFWGHPAGPLLLLLLLVLPPRALPEGPLVFVALVFRHGDRAPLASYPMDPHKEVASTLWPRGLGQLTTEGVRQQLELGRFLRSRYEAFLSPEYRREEVYIRSTDFDRTLESAQANLAGLFPEAAPGSPEARWRPIPVHTVPVAEDKLLRFPMRSCPRYHELLREATEAAEYQEALEGWTGFLSRLENFTGLSLVGEPLRRAWKVLDTLMCQQAHGLPLPAWASPDVLRTLAQISALDIGAHVGPPRAAEKAQLTGGILLNAILANFSRVQRLGLPLKMVMYSAHDSTLLALQGALGLYDGHTPPYAACLGFEFRKHLGNPAKDGGNVTVSLFYRNDSAHLPLPLSLPGCPAPCPLGRFYQLTAPARPPAHGVSCHGPYEAAIPPAPVVPLLAGAVAVLVALSLGLGLLAWRPGCLRALGGPV.

The first 26 residues, 1–26 (MAGLGFWGHPAGPLLLLLLLVLPPRA), serve as a signal peptide directing secretion. Residues 27–393 (LPEGPLVFVA…AAIPPAPVVP (367 aa)) lie on the Extracellular side of the membrane. The Nucleophile role is filled by H41. 3 disulfides stabilise this stretch: C159–C378, C214–C312, and C353–C357. 2 N-linked (GlcNAc...) asparagine glycosylation sites follow: N191 and N269. D289 (proton donor) is an active-site residue. N-linked (GlcNAc...) asparagine glycosylation is found at N330 and N339. The helical transmembrane segment at 394–414 (LLAGAVAVLVALSLGLGLLAW) threads the bilayer. Residues 415-426 (RPGCLRALGGPV) are Cytoplasmic-facing.

It belongs to the histidine acid phosphatase family. As to quaternary structure, homodimer. In terms of processing, glycosylated. In terms of tissue distribution, expressed mainly in the testis. Also expressed in the brain where they are enriched at the postsynaptic sites. Expressed at lower levels in the trachea, prostate, bone marrow, spinal cord, colon, fetal brain, heart, thymus, fetal liver, spleen, leukocytes, ovary, small intestine, pancreas and skeletal muscle. Expression is significantly lower in testicular cancer tissues than in normal testicular tissues. Isoform 3 is expressed in the testis, trachea, prostate and bone marrow.

The protein localises to the membrane. The catalysed reaction is a phosphate monoester + H2O = an alcohol + phosphate. In terms of biological role, may dephosphorylate receptor tyrosine-protein kinase ERBB4 and inhibits its ligand-induced proteolytic cleavage. May play a role in odontogenesis. The protein is Testicular acid phosphatase of Homo sapiens (Human).